Reading from the N-terminus, the 514-residue chain is Probable cytochrome P450 6w1 (514 aa).

Residue cysteine 450 participates in heme binding.

The protein belongs to the cytochrome P450 family. The cofactor is heme.

The protein localises to the endoplasmic reticulum membrane. It is found in the microsome membrane. Its function is as follows. May be involved in the metabolism of insect hormones and in the breakdown of synthetic insecticides. In Drosophila melanogaster (Fruit fly), this protein is Probable cytochrome P450 6w1 (Cyp6w1).